A 271-amino-acid polypeptide reads, in one-letter code: Zinc finger protein 501 (271 aa).

9 consecutive C2H2-type zinc fingers follow at residues 22–44, 50–72, 78–100, 106–128, 134–156, 162–184, 190–212, 218–240, and 246–268; these read SKCSECGKFFTQRSSLTQHQRIH, YVCSECGSCFRKQSNLTQHLRIH, YKCNECEKAFQTKAILVQHLRIH, YKCNECGKAFCQSPSLIKHQRIH, YKCTECGKAFSQSICLTRHQRSH, FKCNECGKAFNQSACLMQHQRIH, YTCTECGKAFTQNSSLVEHERTH, YKCSECEKTFRKQAHLSEHYRIH, and YECVGCGKSFRHSSALLRHQRLH.

The protein belongs to the krueppel C2H2-type zinc-finger protein family.

Its subcellular location is the nucleus. It localises to the nucleolus. Functionally, may be involved in transcriptional regulation. Essential for Golgi structural integrity. This is Zinc finger protein 501 (ZNF501) from Homo sapiens (Human).